A 150-amino-acid polypeptide reads, in one-letter code: Protein Turandot X1/X2 (150 aa).

Positions 1–22 (MRLYIGSLLICVLLGIVPFATA) are cleaved as a signal peptide. A disordered region spans residues 127–150 (REEGQSNHANSPTTSPSRIQKMTK). Residues 132 to 150 (SNHANSPTTSPSRIQKMTK) show a composition bias toward polar residues.

This sequence belongs to the Turandot family.

The protein resides in the secreted. A humoral factor that may play a role in stress tolerance. The polypeptide is Protein Turandot X1/X2 (Drosophila sechellia (Fruit fly)).